We begin with the raw amino-acid sequence, 71 residues long: V-type proton ATPase subunit e (71 aa).

Residues 1–2 are Lumenal-facing; it reads MS. The chain crosses the membrane as a helical span at residues 3-23; the sequence is FFHVVFVAFVIAAIGAAGWFV. Over 24 to 35 the chain is Cytoplasmic; it reads TPKGKNQTLLRT. Residues 36 to 56 traverse the membrane as a helical segment; sequence SLLLTLTCCYLMWAITYLCQL. Residues 57-71 are Lumenal-facing; it reads HPLITPRRSDLRMEY.

The protein belongs to the V-ATPase e1/e2 subunit family. V-ATPase is a heteromultimeric enzyme composed of a peripheral catalytic V1 complex (components A to H) attached to an integral membrane V0 proton pore complex (components: a, c, c', c'', d, e, f and VOA1).

The protein resides in the vacuole membrane. Functionally, subunit of the V0 complex of vacuolar(H+)-ATPase (V-ATPase), a multisubunit enzyme composed of a peripheral complex (V1) that hydrolyzes ATP and a membrane integral complex (V0) that translocates protons. V-ATPase is responsible for acidifying and maintaining the pH of intracellular compartments. The chain is V-type proton ATPase subunit e (VMA9) from Cryptococcus neoformans var. neoformans serotype D (strain JEC21 / ATCC MYA-565) (Filobasidiella neoformans).